The chain runs to 330 residues: Putative aminohydrolase AF_1775 (330 aa).

The Zn(2+) site is built by His-54, His-56, His-181, and Asp-253.

Belongs to the metallo-dependent hydrolases superfamily. ATZ/TRZ family.

The protein is Putative aminohydrolase AF_1775 of Archaeoglobus fulgidus (strain ATCC 49558 / DSM 4304 / JCM 9628 / NBRC 100126 / VC-16).